The sequence spans 443 residues: MAEQRGNMLMKKYEMGKLLGQGTFAKVYHARNTETSESVAIKMIDKEKVLKGGLMDQIKREISVMKLVRHPNIVQLYEVMATKTKIYFVLEHVKGGELFNKVQRGRLKEDAARKYFQQLICAVDFCHSRGVYHRDLKPENLLLDENSNLKVSDFGLSALADCKRQDGLLHTTCGTPAYVAPEVINRRGYDGAKADIWSCGVILFVLLAGYLPFHDKNLMDMYKKIGKAEFKCPSWFNTDVRRLLLRILDPNPSTRISMDKIMENPWFRKGLDAKLLRYNLQPKDAIPVDMSTDFDSFNSAPTLEKKPSNLNAFDIISLSTGLDLSGMFEESDKKESKFTSTSTASTIISKIEDIAKGLRLKLTKKDGGLLKMEGSKPGRKGVMGIDAEIFEVTPNFHLVELKKTNGDTLEYRKVLNQEMRPALKDIVWAWQGEQPKQQQQPTC.

In terms of domain architecture, Protein kinase spans Tyr-13–Phe-267. ATP contacts are provided by residues Leu-19–Val-27 and Lys-42. Asp-135 serves as the catalytic Proton acceptor. The interval Asp-153–Glu-182 is activation loop. Positions Thr-302–Glu-329 constitute an NAF domain. The tract at residues Lys-333–Leu-362 is PPI.

Belongs to the protein kinase superfamily. CAMK Ser/Thr protein kinase family. SNF1 subfamily. Mn(2+) is required as a cofactor.

The enzyme catalyses L-seryl-[protein] + ATP = O-phospho-L-seryl-[protein] + ADP + H(+). The catalysed reaction is L-threonyl-[protein] + ATP = O-phospho-L-threonyl-[protein] + ADP + H(+). Functionally, CIPK serine-threonine protein kinases interact with CBL proteins. Binding of a CBL protein to the regulatory NAF domain of CIPK protein lead to the activation of the kinase in a calcium-dependent manner. The chain is CBL-interacting protein kinase 2 (CIPK2) from Oryza sativa subsp. japonica (Rice).